The primary structure comprises 365 residues: Saoe class I histocompatibility antigen, C alpha chain (365 aa).

The N-terminal stretch at 1-24 is a signal peptide; it reads MTIMAPRTLLLLLSGALSVTETWA. An alpha-1 region spans residues 25–114; the sequence is GSHSMRYFST…LLGYYNQSEA (90 aa). Residues 25–308 lie on the Extracellular side of the membrane; sequence GSHSMRYFST…EPPSQPTIPI (284 aa). An N-linked (GlcNAc...) asparagine glycan is attached at asparagine 110. The segment at 115–206 is alpha-2; sequence GFHTIQWMYG…ENGKEMLQRA (92 aa). Intrachain disulfides connect cysteine 125–cysteine 188 and cysteine 227–cysteine 283. Residues 207 to 298 are alpha-3; that stretch reads EPPKTHVTHH…GLPEPFTLRW (92 aa). Residues 209–297 form the Ig-like C1-type domain; the sequence is PKTHVTHHPV…EGLPEPFTLR (89 aa). Residues 299-308 are connecting peptide; sequence EPPSQPTIPI. The chain crosses the membrane as a helical span at residues 309 to 332; it reads MGIVAILAILGAVVTGAVVAAVMW. At 333–365 the chain is on the cytoplasmic side; sequence RKKSSDKKGGSYSQAARSDSAQGSDVSLTACKV. The disordered stretch occupies residues 337–365; that stretch reads SDKKGGSYSQAARSDSAQGSDVSLTACKV. The span at 346–359 shows a compositional bias: polar residues; sequence QAARSDSAQGSDVS. Serine 356 and serine 359 each carry phosphoserine.

The protein belongs to the MHC class I family. In terms of assembly, heterodimer of an alpha chain and a beta chain (beta-2-microglobulin).

It localises to the membrane. Functionally, involved in the presentation of foreign antigens to the immune system. This is Saoe class I histocompatibility antigen, C alpha chain from Saguinus oedipus (Cotton-top tamarin).